A 178-amino-acid chain; its full sequence is Large ribosomal subunit protein uL6 (178 aa).

It belongs to the universal ribosomal protein uL6 family. Part of the 50S ribosomal subunit.

In terms of biological role, this protein binds to the 23S rRNA, and is important in its secondary structure. It is located near the subunit interface in the base of the L7/L12 stalk, and near the tRNA binding site of the peptidyltransferase center. The protein is Large ribosomal subunit protein uL6 of Frankia casuarinae (strain DSM 45818 / CECT 9043 / HFP020203 / CcI3).